We begin with the raw amino-acid sequence, 413 residues long: Serine hydroxymethyltransferase (413 aa).

(6S)-5,6,7,8-tetrahydrofolate contacts are provided by residues Leu119 and 123–125 (GHL). Lys228 is modified (N6-(pyridoxal phosphate)lysine). (6S)-5,6,7,8-tetrahydrofolate is bound at residue 351 to 353 (SPF).

Belongs to the SHMT family. As to quaternary structure, homodimer. Requires pyridoxal 5'-phosphate as cofactor.

Its subcellular location is the cytoplasm. It carries out the reaction (6R)-5,10-methylene-5,6,7,8-tetrahydrofolate + glycine + H2O = (6S)-5,6,7,8-tetrahydrofolate + L-serine. It functions in the pathway one-carbon metabolism; tetrahydrofolate interconversion. Its pathway is amino-acid biosynthesis; glycine biosynthesis; glycine from L-serine: step 1/1. Catalyzes the reversible interconversion of serine and glycine with tetrahydrofolate (THF) serving as the one-carbon carrier. This reaction serves as the major source of one-carbon groups required for the biosynthesis of purines, thymidylate, methionine, and other important biomolecules. Also exhibits THF-independent aldolase activity toward beta-hydroxyamino acids, producing glycine and aldehydes, via a retro-aldol mechanism. This is Serine hydroxymethyltransferase from Clostridium botulinum (strain Okra / Type B1).